Consider the following 282-residue polypeptide: Bis(5'-nucleosyl)-tetraphosphatase, symmetrical (282 aa).

It belongs to the Ap4A hydrolase family.

It carries out the reaction P(1),P(4)-bis(5'-adenosyl) tetraphosphate + H2O = 2 ADP + 2 H(+). In terms of biological role, hydrolyzes diadenosine 5',5'''-P1,P4-tetraphosphate to yield ADP. In Enterobacter sp. (strain 638), this protein is Bis(5'-nucleosyl)-tetraphosphatase, symmetrical.